Reading from the N-terminus, the 205-residue chain is Transcriptional regulator GfcR (205 aa).

The protein belongs to the purine/pyrimidine phosphoribosyltransferase family. GfcR subfamily.

The protein is Transcriptional regulator GfcR of Methanococcus vannielii (strain ATCC 35089 / DSM 1224 / JCM 13029 / OCM 148 / SB).